The primary structure comprises 551 residues: Colicin-E6 (551 aa).

Disordered regions lie at residues Met1–Gly74, Leu244–Asp269, Pro293–Glu317, Asn406–Asp501, and Glu517–Leu551. Residues Ile20–Asp35 are compositionally biased toward gly residues. Low complexity predominate over residues Gly36–Pro45. Gly residues predominate over residues Trp46 to Gly74. 2 stretches are compositionally biased toward basic and acidic residues: residues Val296–Glu317 and Glu430–Pro484. Residues Lys455–Leu551 form a ribosome inactivating activity region. A binding of immunity protein region spans residues Phe530–Leu551.

The protein belongs to the cloacin colicin family.

Functionally, inactivates ribosomes by hydrolyzing 16S RNA in 30S ribosomes at a specific site. Colicins are polypeptide toxins produced by and active against E.coli and closely related bacteria. This Escherichia coli protein is Colicin-E6.